The following is a 1438-amino-acid chain: DNA polymerase III PolC-type (1438 aa).

The Exonuclease domain occupies 422–578 (YVVFDVETTG…YDTEATAYIF (157 aa)).

Belongs to the DNA polymerase type-C family. PolC subfamily.

Its subcellular location is the cytoplasm. It carries out the reaction DNA(n) + a 2'-deoxyribonucleoside 5'-triphosphate = DNA(n+1) + diphosphate. Functionally, required for replicative DNA synthesis. This DNA polymerase also exhibits 3' to 5' exonuclease activity. The protein is DNA polymerase III PolC-type of Staphylococcus aureus (strain Mu3 / ATCC 700698).